A 158-amino-acid chain; its full sequence is Transcriptional repressor NrdR (158 aa).

A zinc finger lies at 3 to 34; that stretch reads CPYCGYPDSRVIDSRPTDDNTAIRRRRECLKC. The 91-residue stretch at 49–139 folds into the ATP-cone domain; sequence ILVIKKDNRR…VYRQFKDINT (91 aa).

Belongs to the NrdR family. The cofactor is Zn(2+).

Functionally, negatively regulates transcription of bacterial ribonucleotide reductase nrd genes and operons by binding to NrdR-boxes. This is Transcriptional repressor NrdR from Caldanaerobacter subterraneus subsp. tengcongensis (strain DSM 15242 / JCM 11007 / NBRC 100824 / MB4) (Thermoanaerobacter tengcongensis).